A 446-amino-acid polypeptide reads, in one-letter code: tRNA-2-methylthio-N(6)-dimethylallyladenosine synthase (446 aa).

In terms of domain architecture, MTTase N-terminal spans 6–122 (RRYHITTFGC…LGDLLQQVFD (117 aa)). [4Fe-4S] cluster-binding residues include C15, C51, C85, C157, C161, and C164. In terms of domain architecture, Radical SAM core spans 143-380 (RDSNITAWVN…NHLVATKAAE (238 aa)). In terms of domain architecture, TRAM spans 383–446 (QRYLGRIEEI…RPFSLTGVIF (64 aa)).

Belongs to the methylthiotransferase family. MiaB subfamily. As to quaternary structure, monomer. The cofactor is [4Fe-4S] cluster.

It localises to the cytoplasm. The catalysed reaction is N(6)-dimethylallyladenosine(37) in tRNA + (sulfur carrier)-SH + AH2 + 2 S-adenosyl-L-methionine = 2-methylsulfanyl-N(6)-dimethylallyladenosine(37) in tRNA + (sulfur carrier)-H + 5'-deoxyadenosine + L-methionine + A + S-adenosyl-L-homocysteine + 2 H(+). Catalyzes the methylthiolation of N6-(dimethylallyl)adenosine (i(6)A), leading to the formation of 2-methylthio-N6-(dimethylallyl)adenosine (ms(2)i(6)A) at position 37 in tRNAs that read codons beginning with uridine. The sequence is that of tRNA-2-methylthio-N(6)-dimethylallyladenosine synthase from Microcystis aeruginosa (strain NIES-843 / IAM M-2473).